The following is a 359-amino-acid chain: NF-kappa-B inhibitor beta (359 aa).

2 positions are modified to phosphoserine; by RPS6KA1: Ser-19 and Ser-23. 3 ANK repeats span residues Asp-57–Tyr-86, Leu-93–Val-122, and Gly-126–Arg-155. A disordered region spans residues His-153–Glu-194. Residues Thr-160–Thr-172 are compositionally biased toward polar residues. ANK repeat units follow at residues Asp-206–Lys-235, Cys-240–Ala-269, and Gly-273–Glu-302. Residues Ala-298–Ala-359 form a disordered region. 2 positions are modified to phosphoserine: Ser-313 and Ser-318. The segment covering Ser-318–Asp-331 has biased composition (acidic residues). Pro residues predominate over residues Pro-344–Ala-359.

The protein belongs to the NF-kappa-B inhibitor family. As to quaternary structure, interacts with THRB (via ligand-binding domain). Interacts with RELA and REL. Interacts with COMMD1. Interacts with inhibitor kappa B-interacting Ras-like NKIRAS1 and NKIRAS2. Phosphorylated by RPS6KA1; followed by degradation. Interaction with NKIRAS1 and NKIRAS2 probably prevents phosphorylation. In terms of tissue distribution, highly expressed in testis followed by spleen.

It localises to the cytoplasm. Its subcellular location is the nucleus. Inhibits NF-kappa-B by complexing with and trapping it in the cytoplasm. However, the unphosphorylated form resynthesized after cell stimulation is able to bind NF-kappa-B allowing its transport to the nucleus and protecting it to further NFKBIA-dependent inactivation. Association with inhibitor kappa B-interacting NKIRAS1 and NKIRAS2 prevent its phosphorylation rendering it more resistant to degradation, explaining its slower degradation. This Mus musculus (Mouse) protein is NF-kappa-B inhibitor beta (Nfkbib).